The primary structure comprises 647 residues: MESQLHELAEARWFLSKVQDDFRGGKINVEITHKLLEKLDFPCHFAHVKHIFKENDRQNQGRITIEEFRAIYRCIVHREEITEIFNTYTENRKILSENSLIEFLTQEQYEMEIDHSDSVEIINKYEPIEEVKGERQMSIEGFARYMFSSECLLFKENCKTVYQDMNHPLSDYFISSSHNTYLISDQILGPSDIWGYVSALVKGCRCLEIDCWDGSQNEPIVYHGYTFTSKLLFKTVVQAINKYAFVTSDYPVVLSLENHCSPGQQEVMASILQSTFGDFLLSDMLEEFPDTLPSPEALKFKILVKNRKVGTLSETHERIGTDKSGQVLEWKEVIYEDGDEDSGMDPETWDVFLSRIKEEREADPSTLSGIAGVKKRKRKMKIAMALSDLVIYTKAEKFRNFQYSRVYQQFNETNSIGESRARKLSKLRVHEFIFHTAAFITRVYPKMMRADSSNFNPQEFWNVGCQMVALNFQTPGLPMDLQNGKFLDNGGSGYILKPDILRDTTLGFNPNEPEYDDHPVTLTIRIISGIQLPVSSSSNTPDIVVIIEVYGVPNDHVKQQTRVVKNNAFSPKWNETFTFLIQVPELALIRFVVETQQGLLSGNELLGQYTLPVLCMNKGYRRVPLFSKSGANLEPSSLFIYVWYFRE.

An EF-hand domain is found at 43–78 (CHFAHVKHIFKENDRQNQGRITIEEFRAIYRCIVHR). A PI-PLC X-box domain is found at 163–307 (QDMNHPLSDY…LKFKILVKNR (145 aa)). Residues His-178 and His-223 contribute to the active site. The PI-PLC Y-box domain occupies 386 to 502 (LSDLVIYTKA…GYILKPDILR (117 aa)). A C2 domain is found at 502–627 (RDTTLGFNPN…KGYRRVPLFS (126 aa)).

Interacts via its C2 domain with PtdIns(3)P and, to a lesser extent, PtdIns(5)P in vitro. Ca(2+) serves as cofactor. Highly expressed in postpuberal testis, where expression is sperm cell-specific. Also expressed in brain of both sexes.

The protein localises to the nucleus. It is found in the cytoplasm. The protein resides in the perinuclear region. The enzyme catalyses a 1,2-diacyl-sn-glycero-3-phospho-(1D-myo-inositol-4,5-bisphosphate) + H2O = 1D-myo-inositol 1,4,5-trisphosphate + a 1,2-diacyl-sn-glycerol + H(+). In terms of biological role, the production of the second messenger molecules diacylglycerol (DAG) and inositol 1,4,5-trisphosphate (IP3) is mediated by activated phosphatidylinositol-specific phospholipase C enzymes. In vitro, hydrolyzes PtdIns(4,5)P2 in a Ca(2+)-dependent manner. Triggers intracellular Ca(2+) oscillations in oocytes solely during M phase and is involved in inducing oocyte activation and initiating embryonic development up to the blastocyst stage. Is therefore a strong candidate for the egg-activating soluble sperm factor that is transferred from the sperm into the egg cytoplasm following gamete membrane fusion. May exert an inhibitory effect on phospholipase-C-coupled processes that depend on calcium ions and protein kinase C, including CFTR trafficking and function. The sequence is that of 1-phosphatidylinositol 4,5-bisphosphate phosphodiesterase zeta-1 from Mus musculus (Mouse).